The sequence spans 714 residues: Fatty acid oxidation complex subunit alpha (714 aa).

An enoyl-CoA hydratase region spans residues 1 to 190 (MEMASAFTLN…KLGLVDDVVP (190 aa)). Residues 306-714 (APLNSVGILG…FWKTTATDLQ (409 aa)) form a 3-hydroxyacyl-CoA dehydrogenase region.

This sequence in the N-terminal section; belongs to the enoyl-CoA hydratase/isomerase family. In the central section; belongs to the 3-hydroxyacyl-CoA dehydrogenase family. As to quaternary structure, heterotetramer of two alpha chains (FadJ) and two beta chains (FadI).

It localises to the cytoplasm. The catalysed reaction is a (3S)-3-hydroxyacyl-CoA = a (2E)-enoyl-CoA + H2O. It carries out the reaction a 4-saturated-(3S)-3-hydroxyacyl-CoA = a (3E)-enoyl-CoA + H2O. The enzyme catalyses a (3S)-3-hydroxyacyl-CoA + NAD(+) = a 3-oxoacyl-CoA + NADH + H(+). It catalyses the reaction (3S)-3-hydroxybutanoyl-CoA = (3R)-3-hydroxybutanoyl-CoA. The protein operates within lipid metabolism; fatty acid beta-oxidation. Its function is as follows. Catalyzes the formation of a hydroxyacyl-CoA by addition of water on enoyl-CoA. Also exhibits 3-hydroxyacyl-CoA epimerase and 3-hydroxyacyl-CoA dehydrogenase activities. This Escherichia coli O17:K52:H18 (strain UMN026 / ExPEC) protein is Fatty acid oxidation complex subunit alpha.